The chain runs to 968 residues: RNA polymerase-associated protein RapA (968 aa).

A Helicase ATP-binding domain is found at 164–334 (DVGRRHAPRV…FARLRLLDPN (171 aa)). ATP is bound at residue 177–184 (DEVGLGKT). A DEAH box motif is present at residues 280-283 (DEAH). The 173-residue stretch at 490 to 662 (RVEWLMGYLT…YLASPDQTEG (173 aa)) folds into the Helicase C-terminal domain.

It belongs to the SNF2/RAD54 helicase family. RapA subfamily. Interacts with the RNAP. Has a higher affinity for the core RNAP than for the holoenzyme. Its ATPase activity is stimulated by binding to RNAP.

Transcription regulator that activates transcription by stimulating RNA polymerase (RNAP) recycling in case of stress conditions such as supercoiled DNA or high salt concentrations. Probably acts by releasing the RNAP, when it is trapped or immobilized on tightly supercoiled DNA. Does not activate transcription on linear DNA. Probably not involved in DNA repair. This Escherichia coli O1:K1 / APEC protein is RNA polymerase-associated protein RapA.